Consider the following 63-residue polypeptide: MPTKPPYPREAYIVTIEKGKPGQTVTWYQLRADHPKPDSLISEHPTAQEAMDAKKRYEDPDKE.

The tract at residues 35–63 is disordered; sequence PKPDSLISEHPTAQEAMDAKKRYEDPDKE. Residues 51–63 are compositionally biased toward basic and acidic residues; it reads MDAKKRYEDPDKE.

This is an uncharacterized protein from Escherichia coli O157:H7.